Here is a 205-residue protein sequence, read N- to C-terminus: LexA repressor (205 aa).

Residues 28–48 (RAEIAHKLGFRSANSAEEHLK) constitute a DNA-binding region (H-T-H motif). Residues serine 122 and lysine 159 each act as for autocatalytic cleavage activity in the active site.

It belongs to the peptidase S24 family. Homodimer.

The catalysed reaction is Hydrolysis of Ala-|-Gly bond in repressor LexA.. In terms of biological role, represses a number of genes involved in the response to DNA damage (SOS response), including recA and lexA. In the presence of single-stranded DNA, RecA interacts with LexA causing an autocatalytic cleavage which disrupts the DNA-binding part of LexA, leading to derepression of the SOS regulon and eventually DNA repair. The polypeptide is LexA repressor (Idiomarina loihiensis (strain ATCC BAA-735 / DSM 15497 / L2-TR)).